We begin with the raw amino-acid sequence, 564 residues long: Mitochondrial distribution and morphology protein 34-1 (564 aa).

An SMP-LTD domain is found at 1 to 195 (MAFKFNWSPL…LPAIIHRLSL (195 aa)). Polar residues-rich tracts occupy residues 297–322 (PDQN…SQTG) and 329–352 (DNAS…SSYG). Disordered stretches follow at residues 297 to 408 (PDQN…VTSA), 414 to 433 (HEQP…DQSL), and 452 to 473 (DLSS…PFNT). Basic residues predominate over residues 359 to 371 (RHSRAHARRRKKR). Low complexity predominate over residues 383–394 (SDSASVSVSDES). Positions 396-408 (YTESASAPSVTSA) are enriched in polar residues. Positions 452–466 (DLSSEIVRDRAEPSE) are enriched in basic and acidic residues.

Belongs to the MDM34 family. Component of the ER-mitochondria encounter structure (ERMES) or MDM complex, composed of mmm1, mdm10, mdm12 and mdm34.

Its subcellular location is the mitochondrion outer membrane. Component of the ERMES/MDM complex, which serves as a molecular tether to connect the endoplasmic reticulum (ER) and mitochondria. Components of this complex are involved in the control of mitochondrial shape and protein biogenesis, and function in nonvesicular lipid trafficking between the ER and mitochondria. Mdm34 is required for the interaction of the ER-resident membrane protein mmm1 and the outer mitochondrial membrane-resident beta-barrel protein mdm10. In Penicillium rubens (strain ATCC 28089 / DSM 1075 / NRRL 1951 / Wisconsin 54-1255) (Penicillium chrysogenum), this protein is Mitochondrial distribution and morphology protein 34-1.